We begin with the raw amino-acid sequence, 344 residues long: Dihydroorotate dehydrogenase (quinone) (344 aa).

Residues 61-65 (AGLDK) and Thr85 each bind FMN. Lys65 contributes to the substrate binding site. 110–114 (NRMGF) is a substrate binding site. Residues Asn138 and Asn171 each coordinate FMN. Residue Asn171 participates in substrate binding. The active-site Nucleophile is Ser174. Asn176 is a binding site for substrate. Positions 216 and 244 each coordinate FMN. Position 245–246 (245–246 (NT)) interacts with substrate. Residues Gly267, Gly296, and 317 to 318 (YS) each bind FMN.

Belongs to the dihydroorotate dehydrogenase family. Type 2 subfamily. In terms of assembly, monomer. FMN is required as a cofactor.

It localises to the cell membrane. The catalysed reaction is (S)-dihydroorotate + a quinone = orotate + a quinol. Its pathway is pyrimidine metabolism; UMP biosynthesis via de novo pathway; orotate from (S)-dihydroorotate (quinone route): step 1/1. Functionally, catalyzes the conversion of dihydroorotate to orotate with quinone as electron acceptor. This Psychrobacter cryohalolentis (strain ATCC BAA-1226 / DSM 17306 / VKM B-2378 / K5) protein is Dihydroorotate dehydrogenase (quinone).